Reading from the N-terminus, the 535-residue chain is Putative beta-glucosidase 41 (535 aa).

A signal peptide spans 1–27 (MESLMRLVLVLFPFFVVFFVPLDHVSS). Glutamine 49 serves as a coordination point for a beta-D-glucoside. An N-linked (GlcNAc...) asparagine glycan is attached at asparagine 118. A beta-D-glucoside is bound by residues histidine 151 and 196–197 (NE). The active-site Proton donor is glutamate 197. The cysteines at positions 216 and 224 are disulfide-linked. Residues tyrosine 340 and glutamate 413 each coordinate a beta-D-glucoside. Glutamate 413 serves as the catalytic Nucleophile. An N-linked (GlcNAc...) asparagine glycan is attached at asparagine 445. A beta-D-glucoside contacts are provided by residues tryptophan 463, 470 to 471 (EW), and phenylalanine 479. The N-linked (GlcNAc...) asparagine glycan is linked to asparagine 489.

Belongs to the glycosyl hydrolase 1 family.

It catalyses the reaction Hydrolysis of terminal, non-reducing beta-D-glucosyl residues with release of beta-D-glucose.. This Arabidopsis thaliana (Mouse-ear cress) protein is Putative beta-glucosidase 41.